We begin with the raw amino-acid sequence, 352 residues long: MESGSRPSLGQVILLGTSSMVTAVLYSIYRQKAQVAQELKGAKKIHLGEDLKGILSEAPGKCVPYAVIEGAVRSVKETLNSQFVENCKGVIQRLSLQEHKMVWNRTTHLWNDYSKIIHQRTNTVPFDLVPHEDGVAVSVRVLKPLDSVDLGLETVYEKFHPSVQSFTDAIGHYISGERPKGIQETEEMLKVGATLTGIGELVLDNNAVRLQPPKQGMQYYLSSQDFDSLLHRQESSVRLWKILVLVFGFATCATLFFILRKQYLHRQERLRQQQLQEEFLEHEAQLLSQASPEDRESLKSACVVCLSNFKSCVFLECGHVCSCRQCYLALPEPKRCPICRREITRVIPLYNS.

The Cytoplasmic segment spans residues 1 to 8; the sequence is MESGSRPS. Residues 9 to 29 form a helical membrane-spanning segment; the sequence is LGQVILLGTSSMVTAVLYSIY. Residues 30 to 238 are Mitochondrial intermembrane-facing; the sequence is RQKAQVAQEL…LLHRQESSVR (209 aa). Lys-52 participates in a covalent cross-link: Glycyl lysine isopeptide (Lys-Gly) (interchain with G-Cter in ubiquitin). A helical transmembrane segment spans residues 239–259; that stretch reads LWKILVLVFGFATCATLFFIL. Residues 260 to 352 are Cytoplasmic-facing; sequence RKQYLHRQER…ITRVIPLYNS (93 aa). Lys-299 is covalently cross-linked (Glycyl lysine isopeptide (Lys-Gly) (interchain with G-Cter in ubiquitin)). The RING-type zinc-finger motif lies at 302-340; the sequence is CVVCLSNFKSCVFLECGHVCSCRQCYLALPEPKRCPICR.

In terms of assembly, homooligomer. Interacts with MAP3K7/TAK1. Interacts with UBC9. Interacts with and sumoylates DNM1L. Interacts with MAVS. Interacts with TP53 (via N-terminus); the interaction leads to ubiquitination and proteasomal degradation of TP53. Post-translationally, ubiquitinated by PRKN during mitophagy, leading to its degradation and enhancement of mitophagy. Deubiquitinated by USP30. As to expression, expressed in cortical neurons (at protein level).

Its subcellular location is the mitochondrion outer membrane. The protein resides in the peroxisome. It catalyses the reaction S-ubiquitinyl-[E2 ubiquitin-conjugating enzyme]-L-cysteine + [acceptor protein]-L-lysine = [E2 ubiquitin-conjugating enzyme]-L-cysteine + N(6)-ubiquitinyl-[acceptor protein]-L-lysine.. It participates in protein modification; protein ubiquitination. The protein operates within protein modification; protein sumoylation. Exhibits weak E3 ubiquitin-protein ligase activity. E3 ubiquitin ligases accept ubiquitin from an E2 ubiquitin-conjugating enzyme in the form of a thioester and then directly transfer the ubiquitin to targeted substrates. Can ubiquitinate AKT1 preferentially at 'Lys-284' involving 'Lys-48'-linked polyubiquitination and seems to be involved in regulation of Akt signaling by targeting phosphorylated Akt to proteasomal degradation. Mediates polyubiquitination of cytoplasmic TP53 at 'Lys-27' which targets TP53 for proteasomal degradation, thus reducing TP53 levels in the cytoplasm and mitochondrion. Proposed to preferentially act as a SUMO E3 ligase at physiological concentrations. Plays a role in the control of mitochondrial morphology by promoting mitochondrial fragmentation, and influences mitochondrial localization. Likely to promote mitochondrial fission through negatively regulating the mitochondrial fusion proteins MFN1 and MFN2, acting in a pathway that is parallel to the PRKN/PINK1 regulatory pathway. May also be involved in the sumoylation of the membrane fission protein DNM1L. Inhibits cell growth. When overexpressed, activates JNK through MAP3K7/TAK1 and induces caspase-dependent apoptosis. Involved in the modulation of innate immune defense against viruses by inhibiting RIGI-dependent antiviral response. Can mediate RIGI sumoylation and disrupt its polyubiquitination. The sequence is that of Mitochondrial ubiquitin ligase activator of NFKB 1 (Mul1) from Mus musculus (Mouse).